The chain runs to 178 residues: ATP synthase subunit delta (178 aa).

It belongs to the ATPase delta chain family. F-type ATPases have 2 components, F(1) - the catalytic core - and F(0) - the membrane proton channel. F(1) has five subunits: alpha(3), beta(3), gamma(1), delta(1), epsilon(1). F(0) has three main subunits: a(1), b(2) and c(10-14). The alpha and beta chains form an alternating ring which encloses part of the gamma chain. F(1) is attached to F(0) by a central stalk formed by the gamma and epsilon chains, while a peripheral stalk is formed by the delta and b chains.

The protein resides in the cell membrane. In terms of biological role, f(1)F(0) ATP synthase produces ATP from ADP in the presence of a proton or sodium gradient. F-type ATPases consist of two structural domains, F(1) containing the extramembraneous catalytic core and F(0) containing the membrane proton channel, linked together by a central stalk and a peripheral stalk. During catalysis, ATP synthesis in the catalytic domain of F(1) is coupled via a rotary mechanism of the central stalk subunits to proton translocation. This protein is part of the stalk that links CF(0) to CF(1). It either transmits conformational changes from CF(0) to CF(1) or is implicated in proton conduction. This chain is ATP synthase subunit delta, found in Streptococcus pyogenes serotype M2 (strain MGAS10270).